Consider the following 143-residue polypeptide: Large ribosomal subunit protein eL28y (143 aa).

It belongs to the eukaryotic ribosomal protein eL28 family.

The chain is Large ribosomal subunit protein eL28y (RPL28C) from Arabidopsis thaliana (Mouse-ear cress).